We begin with the raw amino-acid sequence, 393 residues long: tRNA(Met) cytidine acetate ligase (393 aa).

ATP contacts are provided by Gly81, Asn142, and Arg167.

The protein belongs to the TmcAL family.

The protein localises to the cytoplasm. The catalysed reaction is cytidine(34) in elongator tRNA(Met) + acetate + ATP = N(4)-acetylcytidine(34) in elongator tRNA(Met) + AMP + diphosphate. Its function is as follows. Catalyzes the formation of N(4)-acetylcytidine (ac(4)C) at the wobble position of elongator tRNA(Met), using acetate and ATP as substrates. First activates an acetate ion to form acetyladenylate (Ac-AMP) and then transfers the acetyl group to tRNA to form ac(4)C34. This Bacillus cytotoxicus (strain DSM 22905 / CIP 110041 / 391-98 / NVH 391-98) protein is tRNA(Met) cytidine acetate ligase.